The primary structure comprises 503 residues: MEFSVKSGSPEKQRSACIVVGVFEPRRLSPIAEQLDKISDGYISALLRRGELEGKPGQTLLLHHVPNILSERILLIGCGKERELDERQYKQVIQKTINTLNDTGSMEAVCFLTELHVKGRNNYWKVRQAVETAKETLYSFDQLKTNKSEPRRPLRKMVFNVPTRRELTSGERAIQHGLAIAAGIKAAKDLGNMPPNICNAAYLASQARQLADTYSKNVITRVIGEQQMRELGMNAYLAVGNGSQNESLMSVIEYKGNPAEDARPIVLVGKGLTFDSGGISIKPAEGMDEMKYDMCGAAAVYGVMRMVAELQLPLNVIGVLAGCENMPGGRAYRPGDVLTTMSGQTVEVLNTDAEGRLVLCDVLTYVERFEPEAVIDVATLTGACVIALGHHITGLMSNHNPLAHELIGASELAGDRAWRLPLADEFQDQLESNFADMANIGGRPGGAITAGCFLSRFTRKYNWAHLDIAGTAWRSGKAKGATGRPVALLSQFLLNRAGFNGEE.

Mn(2+)-binding residues include K270 and D275. K282 is an active-site residue. Positions 293, 352, and 354 each coordinate Mn(2+). R356 is an active-site residue.

This sequence belongs to the peptidase M17 family. It depends on Mn(2+) as a cofactor.

The protein localises to the cytoplasm. It carries out the reaction Release of an N-terminal amino acid, Xaa-|-Yaa-, in which Xaa is preferably Leu, but may be other amino acids including Pro although not Arg or Lys, and Yaa may be Pro. Amino acid amides and methyl esters are also readily hydrolyzed, but rates on arylamides are exceedingly low.. It catalyses the reaction Release of an N-terminal amino acid, preferentially leucine, but not glutamic or aspartic acids.. Its function is as follows. Presumably involved in the processing and regular turnover of intracellular proteins. Catalyzes the removal of unsubstituted N-terminal amino acids from various peptides. This Klebsiella pneumoniae subsp. pneumoniae (strain ATCC 700721 / MGH 78578) protein is Probable cytosol aminopeptidase.